A 123-amino-acid chain; its full sequence is Fluoride-specific ion channel FluC 2 (123 aa).

4 helical membrane-spanning segments follow: residues 3–23, 38–58, 62–82, and 94–114; these read LDGF…RMFI, ILIV…LNIT, LILF…SFIY, and LILL…FCLG. The Na(+) site is built by Gly-72 and Ser-75.

Belongs to the fluoride channel Fluc/FEX (TC 1.A.43) family.

The protein localises to the cell inner membrane. It catalyses the reaction fluoride(in) = fluoride(out). Its activity is regulated as follows. Na(+) is not transported, but it plays an essential structural role and its presence is essential for fluoride channel function. Fluoride-specific ion channel. Important for reducing fluoride concentration in the cell, thus reducing its toxicity. This Prochlorococcus marinus subsp. pastoris (strain CCMP1986 / NIES-2087 / MED4) protein is Fluoride-specific ion channel FluC 2.